Here is a 203-residue protein sequence, read N- to C-terminus: Endo-type membrane-bound lytic murein transglycosylase A (203 aa).

Positions 1-15 are cleaved as a signal peptide; it reads MKLRWFAFLIVLLAG. C16 is lipidated: N-palmitoyl cysteine. The S-diacylglycerol cysteine moiety is linked to residue C16.

The protein belongs to the transglycosylase Slt family.

Its subcellular location is the cell outer membrane. The catalysed reaction is Endolytic cleavage of the (1-&gt;4)-beta-glycosidic linkage between N-acetylmuramic acid (MurNAc) and N-acetylglucosamine (GlcNAc) residues in peptidoglycan with concomitant formation of a 1,6-anhydrobond in the MurNAc residue.. In terms of biological role, murein-degrading enzyme. May play a role in recycling of muropeptides during cell elongation and/or cell division. Preferentially cleaves at a distance of more than two disaccharide units from the ends of the glycan chain. This Shigella dysenteriae serotype 1 (strain Sd197) protein is Endo-type membrane-bound lytic murein transglycosylase A.